We begin with the raw amino-acid sequence, 251 residues long: Methionine aminopeptidase (251 aa).

His79 serves as a coordination point for substrate. Residues Asp96, Asp107, and His170 each contribute to the a divalent metal cation site. His177 is a substrate binding site. Residues Glu204 and Glu235 each coordinate a divalent metal cation.

Belongs to the peptidase M24A family. Methionine aminopeptidase type 1 subfamily. In terms of assembly, monomer. The cofactor is Co(2+). Requires Zn(2+) as cofactor. It depends on Mn(2+) as a cofactor. Fe(2+) serves as cofactor.

The catalysed reaction is Release of N-terminal amino acids, preferentially methionine, from peptides and arylamides.. Removes the N-terminal methionine from nascent proteins. The N-terminal methionine is often cleaved when the second residue in the primary sequence is small and uncharged (Met-Ala-, Cys, Gly, Pro, Ser, Thr, or Val). Requires deformylation of the N(alpha)-formylated initiator methionine before it can be hydrolyzed. The chain is Methionine aminopeptidase from Borreliella burgdorferi (strain ATCC 35210 / DSM 4680 / CIP 102532 / B31) (Borrelia burgdorferi).